The primary structure comprises 102 residues: Chorion protein S15 (102 aa).

A signal peptide spans 1–18 (MKFLIAFVAIAFFACVSA).

Belongs to the chorion protein S15/S18 family.

The protein localises to the secreted. Functionally, chorion membrane (egg shell) protein; plays a role in protecting the egg from the environment. The polypeptide is Chorion protein S15 (Cp15) (Drosophila grimshawi (Hawaiian fruit fly)).